We begin with the raw amino-acid sequence, 219 residues long: 7-cyano-7-deazaguanine synthase (219 aa).

10–20 contributes to the ATP binding site; the sequence is FSGGQDSTTCL. The Zn(2+) site is built by C186, C195, C198, and C201.

This sequence belongs to the QueC family. In terms of assembly, homodimer. Zn(2+) serves as cofactor.

It carries out the reaction 7-carboxy-7-deazaguanine + NH4(+) + ATP = 7-cyano-7-deazaguanine + ADP + phosphate + H2O + H(+). It functions in the pathway purine metabolism; 7-cyano-7-deazaguanine biosynthesis. In terms of biological role, catalyzes the ATP-dependent conversion of 7-carboxy-7-deazaguanine (CDG) to 7-cyano-7-deazaguanine (preQ(0)). The sequence is that of 7-cyano-7-deazaguanine synthase from Bacillus licheniformis (strain ATCC 14580 / DSM 13 / JCM 2505 / CCUG 7422 / NBRC 12200 / NCIMB 9375 / NCTC 10341 / NRRL NRS-1264 / Gibson 46).